The sequence spans 102 residues: Large ribosomal subunit protein bL21 (102 aa).

Belongs to the bacterial ribosomal protein bL21 family. In terms of assembly, part of the 50S ribosomal subunit. Contacts protein L20.

In terms of biological role, this protein binds to 23S rRNA in the presence of protein L20. This is Large ribosomal subunit protein bL21 from Bifidobacterium longum (strain DJO10A).